A 231-amino-acid chain; its full sequence is NADH-ubiquinone oxidoreductase chain 4 (231 aa).

6 helical membrane-spanning segments follow: residues 1–21 (PIAGSMVLAAILLKLGGYGII), 34–54 (MFLPFIVLALWGAILANLTCL), 63–85 (IAYSSVSHMGLVVAAIMIQTPWG), 89–111 (AMTLMIAHGFTSSALFCLANTTY), 128–148 (ILPMATTWWLLTNLMNIAIPP), and 156–176 (LLIMSALFSWCPTTIILLGLS).

This sequence belongs to the complex I subunit 4 family.

It localises to the mitochondrion membrane. The enzyme catalyses a ubiquinone + NADH + 5 H(+)(in) = a ubiquinol + NAD(+) + 4 H(+)(out). Its function is as follows. Core subunit of the mitochondrial membrane respiratory chain NADH dehydrogenase (Complex I) that is believed to belong to the minimal assembly required for catalysis. Complex I functions in the transfer of electrons from NADH to the respiratory chain. The immediate electron acceptor for the enzyme is believed to be ubiquinone. The chain is NADH-ubiquinone oxidoreductase chain 4 (MT-ND4) from Gloydius intermedius (Central Asian pit viper).